A 430-amino-acid polypeptide reads, in one-letter code: tRNA(Ile)-lysidine synthase (430 aa).

ATP is bound at residue 27-32 (SGGSDS).

This sequence belongs to the tRNA(Ile)-lysidine synthase family.

It is found in the cytoplasm. The catalysed reaction is cytidine(34) in tRNA(Ile2) + L-lysine + ATP = lysidine(34) in tRNA(Ile2) + AMP + diphosphate + H(+). Ligates lysine onto the cytidine present at position 34 of the AUA codon-specific tRNA(Ile) that contains the anticodon CAU, in an ATP-dependent manner. Cytidine is converted to lysidine, thus changing the amino acid specificity of the tRNA from methionine to isoleucine. The sequence is that of tRNA(Ile)-lysidine synthase from Rickettsia bellii (strain RML369-C).